We begin with the raw amino-acid sequence, 98 residues long: Cysteine-rich and transmembrane domain-containing protein WIH2 (98 aa).

The tract at residues methionine 1–serine 77 is disordered. Over residues valine 9–glycine 21 the composition is skewed to pro residues. Low complexity predominate over residues tyrosine 37–glutamine 55. Positions glycine 56–glutamine 70 are enriched in pro residues. Residues glutamine 75–cysteine 92 form a helical membrane-spanning segment.

The protein belongs to the CYSTM1 family. Expressed in floral organ primordia.

It localises to the membrane. Required for the promotion of megasporogenesis, or promotion of germ cell formation from somatic precursor cells. Acts redundantly with WIH1. Functions in a genetic pathway downstream of SPL/NZZ and WUS and together with TRN2 in promoting megasporogenesis. This is Cysteine-rich and transmembrane domain-containing protein WIH2 from Arabidopsis thaliana (Mouse-ear cress).